We begin with the raw amino-acid sequence, 155 residues long: Keratin-associated protein 4-7 (155 aa).

A run of 20 repeats spans residues 5 to 9 (CCGSV), 24 to 28 (CCRPS), 29 to 33 (CCQTT), 34 to 38 (CCRTT), 44 to 48 (CCVSS), 49 to 53 (CCRPQ), 54 to 58 (CCQSV), 59 to 63 (CCQPT), 64 to 68 (CCRPT), 69 to 73 (CCETT), 74 to 78 (CCHPR), 79 to 83 (CCISS), 84 to 88 (CCRPS), 89 to 93 (CCMSS), 94 to 98 (CCKPQ), 99 to 103 (CCQSV), 104 to 108 (CCQPT), 109 to 113 (CCRPS), 114 to 118 (CCRPC), and 119 to 123 (CCLRP). The tract at residues 5 to 123 (CCGSVCSDQG…CCRPCCCLRP (119 aa)) is 20 X 5 AA repeats of C-C-[GIKRQVHEML]-[SPTRV]-[STVQRCP].

This sequence belongs to the KRTAP type 4 family. As to quaternary structure, interacts with hair keratins. In terms of tissue distribution, expressed in the hair follicles.

Functionally, in the hair cortex, hair keratin intermediate filaments are embedded in an interfilamentous matrix, consisting of hair keratin-associated proteins (KRTAP), which are essential for the formation of a rigid and resistant hair shaft through their extensive disulfide bond cross-linking with abundant cysteine residues of hair keratins. The matrix proteins include the high-sulfur and high-glycine-tyrosine keratins. The polypeptide is Keratin-associated protein 4-7 (KRTAP4-7) (Homo sapiens (Human)).